The following is a 343-amino-acid chain: Uroporphyrinogen decarboxylase (343 aa).

Substrate contacts are provided by residues Arg25–Arg29, Asp75, Tyr152, Ser207, and His323.

It belongs to the uroporphyrinogen decarboxylase family. Homodimer.

Its subcellular location is the cytoplasm. It carries out the reaction uroporphyrinogen III + 4 H(+) = coproporphyrinogen III + 4 CO2. Its pathway is porphyrin-containing compound metabolism; protoporphyrin-IX biosynthesis; coproporphyrinogen-III from 5-aminolevulinate: step 4/4. Its function is as follows. Catalyzes the decarboxylation of four acetate groups of uroporphyrinogen-III to yield coproporphyrinogen-III. This is Uroporphyrinogen decarboxylase from Jannaschia sp. (strain CCS1).